The sequence spans 92 residues: Small ribosomal subunit protein bS20 (92 aa).

The interval 1–22 (MANSPQSKKRARQAEARAAVNK) is disordered.

Belongs to the bacterial ribosomal protein bS20 family.

Its function is as follows. Binds directly to 16S ribosomal RNA. This Cereibacter sphaeroides (strain ATCC 17029 / ATH 2.4.9) (Rhodobacter sphaeroides) protein is Small ribosomal subunit protein bS20.